Consider the following 522-residue polypeptide: MSFSRSAADPADTLPDLAATLAAPGDDAFVALGDAFHTRLPAAPLPAPYVVGFSAEVAQLLGLPPSLAAHAQFAELFAGNPTRDWPAHALPYASVYSGHQFGVWAGQLGDGRALTIGELPGSDGRRYELQLKGGGRTPYSRMGDGRAVLRSSIREYLCSEAMHHLGIPTTRALTVIGSDQPVVREEIETSAVVTRVSESFVRFGHFEHFFSNDRPDLLRRLADHVIERFYPACREADDPYLALLEAAMLRTADMVAQWQAVGFCHGVMNTDNMSILGVTIDYGPFGFVDAFDANHICNHSDTSGRYAYRMQPRIAHWNCYCLAQALLPLIGLQHGIGDDDARAERAVDDAQAVLAKFPERFGPALERAMRAKLGLELEREHDAELANQLLETMHASHADFTLTFRRLAQLSKHDASRDAPVRDLFIDRAAFDAWANLYRARLSEETRDDAARAAAMNRVNPKYVLRNHLAEVAIRRAKDKDFSEVERLAQILRRPFDEQPEHEPYAALPPDWAGSLEVSCSS.

ATP contacts are provided by Gly-109, Gly-111, Arg-112, Lys-132, Asp-144, Gly-145, Arg-195, and Arg-202. Asp-271 acts as the Proton acceptor in catalysis. Mg(2+) is bound by residues Asn-272 and Asp-281. Position 281 (Asp-281) interacts with ATP.

This sequence belongs to the SELO family. Requires Mg(2+) as cofactor. The cofactor is Mn(2+).

The enzyme catalyses L-seryl-[protein] + ATP = 3-O-(5'-adenylyl)-L-seryl-[protein] + diphosphate. It catalyses the reaction L-threonyl-[protein] + ATP = 3-O-(5'-adenylyl)-L-threonyl-[protein] + diphosphate. It carries out the reaction L-tyrosyl-[protein] + ATP = O-(5'-adenylyl)-L-tyrosyl-[protein] + diphosphate. The catalysed reaction is L-histidyl-[protein] + UTP = N(tele)-(5'-uridylyl)-L-histidyl-[protein] + diphosphate. The enzyme catalyses L-seryl-[protein] + UTP = O-(5'-uridylyl)-L-seryl-[protein] + diphosphate. It catalyses the reaction L-tyrosyl-[protein] + UTP = O-(5'-uridylyl)-L-tyrosyl-[protein] + diphosphate. In terms of biological role, nucleotidyltransferase involved in the post-translational modification of proteins. It can catalyze the addition of adenosine monophosphate (AMP) or uridine monophosphate (UMP) to a protein, resulting in modifications known as AMPylation and UMPylation. The chain is Protein nucleotidyltransferase YdiU from Burkholderia vietnamiensis (strain G4 / LMG 22486) (Burkholderia cepacia (strain R1808)).